The following is a 403-amino-acid chain: Histidine--tRNA ligase (403 aa).

Belongs to the class-II aminoacyl-tRNA synthetase family. As to quaternary structure, homodimer.

It is found in the cytoplasm. It catalyses the reaction tRNA(His) + L-histidine + ATP = L-histidyl-tRNA(His) + AMP + diphosphate + H(+). The polypeptide is Histidine--tRNA ligase (Sulfurovum sp. (strain NBC37-1)).